Consider the following 150-residue polypeptide: Large ribosomal subunit protein bL9 (150 aa).

This sequence belongs to the bacterial ribosomal protein bL9 family.

Its function is as follows. Binds to the 23S rRNA. This Vibrio atlanticus (strain LGP32) (Vibrio splendidus (strain Mel32)) protein is Large ribosomal subunit protein bL9.